The sequence spans 311 residues: MPDIACQPHQDPQGKLNWVGMSGIELPIKIEQDSQTLTLSSQVQAYVSLDDPLSKGIHMSRLYLILDEMGSNAPLNPASIQTLLTAFIESHQGLSQNAFVEFRFDYYERRRSLKSDNSGWKHYPCTLRGEMRNGQFECEISISVPYSSTCPCSAALSRQLIQEAFEQQFNGQDLDYNQVLEWLGTPEGICATPHSQRSYAQVKLKVNAEHPLNLSNVINQIEDAVKTPVQSTVKREDEQEFARLNATNLMFCEDAARRLQAKLESCPEYKDYWVRVNHLESLHPHDAVAIVTKNVPGGYSDEPNFMERFQN.

This sequence belongs to the GTP cyclohydrolase IV family.

It carries out the reaction GTP + H2O = 7,8-dihydroneopterin 3'-triphosphate + formate + H(+). It participates in cofactor biosynthesis; 7,8-dihydroneopterin triphosphate biosynthesis; 7,8-dihydroneopterin triphosphate from GTP: step 1/1. In terms of biological role, converts GTP to 7,8-dihydroneopterin triphosphate. The sequence is that of GTP cyclohydrolase FolE2 from Hydrogenovibrio crunogenus (strain DSM 25203 / XCL-2) (Thiomicrospira crunogena).